The primary structure comprises 209 residues: MSKVTVFDHPLIKHKLTILRDKNTGSNQFRQLVSEIATLMCYEVTRDFKLEDCEVETPIGKTTGQTLSGKKLGVVPILRAGLGMVEGFLSVLPAAKVGHIGLYRDPKTLKPVEYYCKLPKDVEERDIIVVDPMLATGGSAEAAITFLKEHGCKNIKLVNIIAAPEGIKMVQEKHPDVDIYVAGLDEKLNDHGYIVPGLGDAGDRLFGTK.

5-phospho-alpha-D-ribose 1-diphosphate is bound by residues arginine 79, arginine 104, and 131–139; that span reads DPMLATGGS. Residues isoleucine 194 and 199–201 each bind uracil; that span reads GDA. A 5-phospho-alpha-D-ribose 1-diphosphate-binding site is contributed by aspartate 200.

The protein belongs to the UPRTase family. The cofactor is Mg(2+).

The enzyme catalyses UMP + diphosphate = 5-phospho-alpha-D-ribose 1-diphosphate + uracil. The protein operates within pyrimidine metabolism; UMP biosynthesis via salvage pathway; UMP from uracil: step 1/1. Its activity is regulated as follows. Allosterically activated by GTP. Functionally, catalyzes the conversion of uracil and 5-phospho-alpha-D-ribose 1-diphosphate (PRPP) to UMP and diphosphate. In Finegoldia magna (strain ATCC 29328 / DSM 20472 / WAL 2508) (Peptostreptococcus magnus), this protein is Uracil phosphoribosyltransferase.